The sequence spans 105 residues: MAQERSGIAVGLNKGHKTTPLNTPKTRISRSKGKASRRTAFVRDIAREVVGLAPYERRVIELLRNAQDKRARKLAKKRLGTFTRGKRKVEDMQRVIAEARRVGAH.

Residues 1–36 (MAQERSGIAVGLNKGHKTTPLNTPKTRISRSKGKAS) are disordered. The span at 27–36 (RISRSKGKAS) shows a compositional bias: basic residues.

It belongs to the eukaryotic ribosomal protein eL36 family. As to quaternary structure, component of the large ribosomal subunit (LSU).

It localises to the cytoplasm. Functionally, component of the ribosome, a large ribonucleoprotein complex responsible for the synthesis of proteins in the cell. The small ribosomal subunit (SSU) binds messenger RNAs (mRNAs) and translates the encoded message by selecting cognate aminoacyl-transfer RNA (tRNA) molecules. The large subunit (LSU) contains the ribosomal catalytic site termed the peptidyl transferase center (PTC), which catalyzes the formation of peptide bonds, thereby polymerizing the amino acids delivered by tRNAs into a polypeptide chain. The nascent polypeptides leave the ribosome through a tunnel in the LSU and interact with protein factors that function in enzymatic processing, targeting, and the membrane insertion of nascent chains at the exit of the ribosomal tunnel. The chain is Large ribosomal subunit protein eL36 from Emericella nidulans (strain FGSC A4 / ATCC 38163 / CBS 112.46 / NRRL 194 / M139) (Aspergillus nidulans).